The chain runs to 398 residues: Probable peptidoglycan glycosyltransferase FtsW (398 aa).

The Cytoplasmic segment spans residues 1–25; sequence MCYGGTAMMAFADIKEALTPKPSAQ. The helical transmembrane segment at 26 to 46 threads the bilayer; it reads LYDVPLLYCMLMLMGVGFVMV. Residues 47–69 are Periplasmic-facing; that stretch reads TSASMPTADRLFGNIYHFTIRHG. Residues 70 to 90 traverse the membrane as a helical segment; sequence IFLALSFCLFWITTSVPMSWW. Lys91 is a topological domain (cytoplasmic). A helical membrane pass occupies residues 92–112; that stretch reads KANPYLLLVGLGLLLIVLIVG. The Periplasmic segment spans residues 113 to 120; that stretch reads REVNGSTR. The helical transmembrane segment at 121 to 141 threads the bilayer; it reads WIPIGPFNIQASELAKLFFFS. Residues 142–156 are Cytoplasmic-facing; that stretch reads YISGYLVRKRSEVQE. Residues 157 to 177 form a helical membrane-spanning segment; that stretch reads NIKGFIKPILVFAAYAGLILM. Topologically, residues 178–179 are periplasmic; the sequence is QP. A helical membrane pass occupies residues 180-200; that stretch reads DLGTVVVMFVTTVGLLFLAGA. A topological domain (cytoplasmic) is located at residue Lys201. A helical membrane pass occupies residues 202–222; that stretch reads LWQFFVLILTGVALVIGLIVL. The Periplasmic portion of the chain corresponds to 223-289; sequence EPYRMARVIG…DFIFAVIAEE (67 aa). Residues 290 to 312 form a helical membrane-spanning segment; it reads LGFVGVSSILIVLGTLVFRALLI. Topologically, residues 313 to 324 are cytoplasmic; that stretch reads GQNALKNGKEYE. The chain crosses the membrane as a helical span at residues 325–345; the sequence is GYLALAIGIWFAFQTMVNVGA. Residues 346-356 lie on the Periplasmic side of the membrane; it reads SAGILPTKGLT. A helical membrane pass occupies residues 357-377; the sequence is LPFISYGGSSLLMMTIAAGIL. The Cytoplasmic portion of the chain corresponds to 378–398; that stretch reads LRVDFETKMATKQATSGGAKR.

Belongs to the SEDS family. FtsW subfamily.

The protein localises to the cell inner membrane. The catalysed reaction is [GlcNAc-(1-&gt;4)-Mur2Ac(oyl-L-Ala-gamma-D-Glu-L-Lys-D-Ala-D-Ala)](n)-di-trans,octa-cis-undecaprenyl diphosphate + beta-D-GlcNAc-(1-&gt;4)-Mur2Ac(oyl-L-Ala-gamma-D-Glu-L-Lys-D-Ala-D-Ala)-di-trans,octa-cis-undecaprenyl diphosphate = [GlcNAc-(1-&gt;4)-Mur2Ac(oyl-L-Ala-gamma-D-Glu-L-Lys-D-Ala-D-Ala)](n+1)-di-trans,octa-cis-undecaprenyl diphosphate + di-trans,octa-cis-undecaprenyl diphosphate + H(+). The protein operates within cell wall biogenesis; peptidoglycan biosynthesis. In terms of biological role, peptidoglycan polymerase that is essential for cell division. In Pseudoalteromonas translucida (strain TAC 125), this protein is Probable peptidoglycan glycosyltransferase FtsW.